A 453-amino-acid chain; its full sequence is tRNA modification GTPase MnmE (453 aa).

(6S)-5-formyl-5,6,7,8-tetrahydrofolate-binding residues include Arg22, Glu79, and Lys119. Residues 215–376 form the TrmE-type G domain; it reads GMKVVIAGRP…LKAHLKSLMG (162 aa). Asn225 contributes to the K(+) binding site. Residues 225–230, 244–250, 269–272, and 334–337 contribute to the GTP site; these read NAGKSS, TEIAGTT, DTAG, and NKAD. Residue Ser229 coordinates Mg(2+). K(+) contacts are provided by Thr244, Ile246, and Thr249. Residue Thr250 coordinates Mg(2+). Lys453 is a binding site for (6S)-5-formyl-5,6,7,8-tetrahydrofolate.

The protein belongs to the TRAFAC class TrmE-Era-EngA-EngB-Septin-like GTPase superfamily. TrmE GTPase family. In terms of assembly, homodimer. Heterotetramer of two MnmE and two MnmG subunits. K(+) serves as cofactor.

Its subcellular location is the cytoplasm. In terms of biological role, exhibits a very high intrinsic GTPase hydrolysis rate. Involved in the addition of a carboxymethylaminomethyl (cmnm) group at the wobble position (U34) of certain tRNAs, forming tRNA-cmnm(5)s(2)U34. The sequence is that of tRNA modification GTPase MnmE from Shewanella loihica (strain ATCC BAA-1088 / PV-4).